Consider the following 499-residue polypeptide: GTPase Der (499 aa).

An EngA-type G 1 domain is found at 3–166 (PVIALVGRPN…QALGIFPKDN (164 aa)). Residues 9–16 (GRPNVGKS), 56–60 (DTGGI), and 118–121 (NKVD) each bind GTP. A disordered region spans residues 166-199 (NADENAEGEEGGELAEGEEVVAEGQEPKRIPGPS). Residues 168–186 (DENAEGEEGGELAEGEEVV) show a composition bias toward acidic residues. Over residues 190 to 199 (QEPKRIPGPS) the composition is skewed to basic and acidic residues. In terms of domain architecture, EngA-type G 2 spans 204–377 (IKIAIIGRPN…SVQAAFKSAI (174 aa)). GTP contacts are provided by residues 210–217 (GRPNVGKS), 257–261 (DTAGV), and 322–325 (NKWD). The KH-like domain occupies 378-462 (TRWPTSRLTQ…PIRIEYKGGD (85 aa)). A compositionally biased stretch (basic and acidic residues) spans 459-472 (KGGDNPYEGKKNTL). The disordered stretch occupies residues 459 to 499 (KGGDNPYEGKKNTLTDRQVNKKRRLMSHHKKAEKKRRDKKR). The segment covering 478 to 499 (NKKRRLMSHHKKAEKKRRDKKR) has biased composition (basic residues).

This sequence belongs to the TRAFAC class TrmE-Era-EngA-EngB-Septin-like GTPase superfamily. EngA (Der) GTPase family. As to quaternary structure, associates with the 50S ribosomal subunit.

In terms of biological role, GTPase that plays an essential role in the late steps of ribosome biogenesis. The sequence is that of GTPase Der from Stutzerimonas stutzeri (strain A1501) (Pseudomonas stutzeri).